The following is a 315-amino-acid chain: Calumenin (315 aa).

The N-terminal stretch at 1–19 (MDLRQFLMCLSLCTAFALS) is a signal peptide. The residue at position 44 (S44) is a Phosphoserine. Y47 carries the post-translational modification Phosphotyrosine. Position 65 is a phosphothreonine (T65). EF-hand domains lie at 68–103 (ESKE…AQKR), 104–139 (WIYE…YVLD), 151–186 (QMMV…EEYD), 188–223 (MKDI…HDGN), 229–264 (WVKT…SDYD), and 265–300 (HAEA…FVGS). S69 is subject to Phosphoserine; by FAM20C. Residues D81, D83, D85, E92, D117, N119, D121, and E128 each contribute to the Ca(2+) site. N131 carries N-linked (GlcNAc...) (complex) asparagine glycosylation. Residue D164 coordinates Ca(2+). Position 165 is an N6-acetyllysine (K165). 12 residues coordinate Ca(2+): D166, D168, E175, D201, N203, D205, E212, D242, N244, D246, K248, and E253. Phosphothreonine is present on T254. Phosphoserine occurs at positions 261 and 277. 5 residues coordinate Ca(2+): D278, N280, D282, K284, and E289. Positions 312 to 315 (HDEF) match the Prevents secretion from ER motif.

This sequence belongs to the CREC family. Interacts with GGCX. Ubiquitously expressed. Expressed at high levels in heart, placenta and skeletal muscle, at lower levels in lung, kidney and pancreas and at very low levels in brain and liver.

Its subcellular location is the endoplasmic reticulum membrane. It localises to the golgi apparatus. The protein resides in the secreted. It is found in the melanosome. The protein localises to the sarcoplasmic reticulum lumen. Its function is as follows. Involved in regulation of vitamin K-dependent carboxylation of multiple N-terminal glutamate residues. Seems to inhibit gamma-carboxylase GGCX. Binds 7 calcium ions with a low affinity. The sequence is that of Calumenin (CALU) from Homo sapiens (Human).